A 150-amino-acid polypeptide reads, in one-letter code: Ribosome-binding factor A (150 aa).

The tract at residues 126 to 150 (EVARDLSHDDDEDGGADEAPRNGDE) is disordered.

The protein belongs to the RbfA family. In terms of assembly, monomer. Binds 30S ribosomal subunits, but not 50S ribosomal subunits or 70S ribosomes.

It localises to the cytoplasm. One of several proteins that assist in the late maturation steps of the functional core of the 30S ribosomal subunit. Associates with free 30S ribosomal subunits (but not with 30S subunits that are part of 70S ribosomes or polysomes). Required for efficient processing of 16S rRNA. May interact with the 5'-terminal helix region of 16S rRNA. The polypeptide is Ribosome-binding factor A (Brucella suis (strain ATCC 23445 / NCTC 10510)).